Consider the following 323-residue polypeptide: L-lactate dehydrogenase (323 aa).

Residues V18, D39, Y69, and 83–84 each bind NAD(+); that span reads GA. Residues Q86 and R92 each coordinate substrate. NAD(+) contacts are provided by residues S105, 122–124, and S147; that span reads VAN. A substrate-binding site is contributed by 124 to 127; sequence NPVD. Substrate is bound at residue 152–155; it reads DTGR. The Proton acceptor role is filled by H179. At Y223 the chain carries Phosphotyrosine. Substrate is bound at residue T232.

Belongs to the LDH/MDH superfamily. LDH family. As to quaternary structure, homotetramer.

It is found in the cytoplasm. It carries out the reaction (S)-lactate + NAD(+) = pyruvate + NADH + H(+). Its pathway is fermentation; pyruvate fermentation to lactate; (S)-lactate from pyruvate: step 1/1. Under neutral conditions, the reaction is stimulated 4-fold by fructose 1,6-bisphosphate (FBP), however the L-lactate dehydrogenase is a nonallosteric enzyme. Calcium and zinc ions at 1 mM stimulate the activity almost 2-fold. Weakly inhibited by cadmium, cobalt and copper ions. Its function is as follows. Catalyzes the conversion of lactate to pyruvate. The protein is L-lactate dehydrogenase of Lactobacillus helveticus (Lactobacillus suntoryeus).